The chain runs to 143 residues: Interferon gamma (143 aa).

Glutamine 1 bears the Pyrrolidone carboxylic acid mark. N-linked (GlcNAc...) asparagine glycans are attached at residues asparagine 25 and asparagine 97.

The protein belongs to the type II (or gamma) interferon family. As to quaternary structure, homodimer. Interacts with IFNGR1 (via extracellular domain); this interaction promotes IFNGR1 dimerization.

Its subcellular location is the secreted. Functionally, type II interferon produced by immune cells such as T-cells and NK cells that plays crucial roles in antimicrobial, antiviral, and antitumor responses by activating effector immune cells and enhancing antigen presentation. Primarily signals through the JAK-STAT pathway after interaction with its receptor IFNGR1 to affect gene regulation. Upon IFNG binding, IFNGR1 intracellular domain opens out to allow association of downstream signaling components JAK2, JAK1 and STAT1, leading to STAT1 activation, nuclear translocation and transcription of IFNG-regulated genes. Many of the induced genes are transcription factors such as IRF1 that are able to further drive regulation of a next wave of transcription. Plays a role in class I antigen presentation pathway by inducing a replacement of catalytic proteasome subunits with immunoproteasome subunits. In turn, increases the quantity, quality, and repertoire of peptides for class I MHC loading. Increases the efficiency of peptide generation also by inducing the expression of activator PA28 that associates with the proteasome and alters its proteolytic cleavage preference. Up-regulates as well MHC II complexes on the cell surface by promoting expression of several key molecules such as cathepsins B/CTSB, H/CTSH, and L/CTSL. Participates in the regulation of hematopoietic stem cells during development and under homeostatic conditions by affecting their development, quiescence, and differentiation. This Pan troglodytes (Chimpanzee) protein is Interferon gamma (IFNG).